Here is a 514-residue protein sequence, read N- to C-terminus: Histidine ammonia-lyase (514 aa).

The segment at residues Ala-146–Gly-148 is a cross-link (5-imidazolinone (Ala-Gly)). Position 147 is a 2,3-didehydroalanine (Ser) (Ser-147).

Belongs to the PAL/histidase family. In terms of processing, contains an active site 4-methylidene-imidazol-5-one (MIO), which is formed autocatalytically by cyclization and dehydration of residues Ala-Ser-Gly.

It localises to the cytoplasm. The catalysed reaction is L-histidine = trans-urocanate + NH4(+). Its pathway is amino-acid degradation; L-histidine degradation into L-glutamate; N-formimidoyl-L-glutamate from L-histidine: step 1/3. The sequence is that of Histidine ammonia-lyase from Clostridium tetani (strain Massachusetts / E88).